The chain runs to 724 residues: 1,4-alpha-glucan branching enzyme GlgB 1 (724 aa).

The active-site Nucleophile is the Asp-403. The active-site Proton donor is the Glu-456.

It belongs to the glycosyl hydrolase 13 family. GlgB subfamily. In terms of assembly, monomer.

The enzyme catalyses Transfers a segment of a (1-&gt;4)-alpha-D-glucan chain to a primary hydroxy group in a similar glucan chain.. The protein operates within glycan biosynthesis; glycogen biosynthesis. Functionally, catalyzes the formation of the alpha-1,6-glucosidic linkages in glycogen by scission of a 1,4-alpha-linked oligosaccharide from growing alpha-1,4-glucan chains and the subsequent attachment of the oligosaccharide to the alpha-1,6 position. The chain is 1,4-alpha-glucan branching enzyme GlgB 1 from Xanthomonas campestris pv. campestris (strain 8004).